We begin with the raw amino-acid sequence, 314 residues long: MIKVVFMGTPDFSVPVLRRLIEDGYDVIGVVTQPDRPVGRKKVLTPTPVKVEAEKHGIPVLQPLRIREKDEYEKVLALEPDLIVTAAFGQIVPNEILEAPKYGCINVHASLLPELRGGAPIHYAIMEGKEKTGITIMYMVEKLDAGDILTQVEVEIEERETTGSLFDKLSEAGAHLLSKTVPLLIQGKLEPIKQNEEEVTFAYNIKREQEKIDWTKTGEEVYNHIRGLNPWPVAYTTLAGQVVKVWWGEKVPVTKSAEAGTIVAIEEDGFVVATGNETGVKITELQPSGKKRMSCSQFLRGTKPEIGTKLGENA.

Position 110–113 (110–113 (SLLP)) interacts with (6S)-5,6,7,8-tetrahydrofolate.

This sequence belongs to the Fmt family.

It carries out the reaction L-methionyl-tRNA(fMet) + (6R)-10-formyltetrahydrofolate = N-formyl-L-methionyl-tRNA(fMet) + (6S)-5,6,7,8-tetrahydrofolate + H(+). Its function is as follows. Attaches a formyl group to the free amino group of methionyl-tRNA(fMet). The formyl group appears to play a dual role in the initiator identity of N-formylmethionyl-tRNA by promoting its recognition by IF2 and preventing the misappropriation of this tRNA by the elongation apparatus. This Bacillus anthracis (strain A0248) protein is Methionyl-tRNA formyltransferase.